A 733-amino-acid chain; its full sequence is Catalase-peroxidase 2 (733 aa).

A disordered region spans residues methionine 1–asparagine 35. Positions tryptophan 106–tyrosine 234 form a cross-link, tryptophyl-tyrosyl-methioninium (Trp-Tyr) (with M-260). Residue histidine 107 is the Proton acceptor of the active site. A cross-link (tryptophyl-tyrosyl-methioninium (Tyr-Met) (with W-106)) is located at residues tyrosine 234–methionine 260. Histidine 275 lines the heme pocket.

Belongs to the peroxidase family. Peroxidase/catalase subfamily. In terms of assembly, homodimer or homotetramer. Requires heme b as cofactor. Formation of the three residue Trp-Tyr-Met cross-link is important for the catalase, but not the peroxidase activity of the enzyme.

The catalysed reaction is H2O2 + AH2 = A + 2 H2O. It catalyses the reaction 2 H2O2 = O2 + 2 H2O. Bifunctional enzyme with both catalase and broad-spectrum peroxidase activity. May play a role in the intracellular survival of mycobacteria. This Mycolicibacterium fortuitum (Mycobacterium fortuitum) protein is Catalase-peroxidase 2.